We begin with the raw amino-acid sequence, 738 residues long: Photosystem I P700 chlorophyll a apoprotein A2 (738 aa).

8 helical membrane-spanning segments follow: residues 46-69 (LFST…FHIA), 135-158 (LYQG…LHLQ), 175-199 (LNHH…HVAI), 273-291 (IAHH…GHMY), 333-356 (LHFQ…QHMY), 372-398 (AALY…IFFI), 420-442 (AIIS…LYVH), and 521-539 (FLVH…LILV). Residues Cys-563 and Cys-572 each contribute to the [4Fe-4S] cluster site. Transmembrane regions (helical) follow at residues 579–600 (AFYL…YWHW) and 647–669 (LAVW…MFLI). His-658, Met-666, and Tyr-674 together coordinate chlorophyll a. Trp-675 is a phylloquinone binding site. The helical transmembrane segment at 711-731 (VVGLAHFTVGYVLTYGAFLIA) threads the bilayer.

Belongs to the PsaA/PsaB family. The PsaA/B heterodimer binds the P700 chlorophyll special pair and subsequent electron acceptors. PSI consists of a core antenna complex that captures photons, and an electron transfer chain that converts photonic excitation into a charge separation. The cyanobacterial PSI reaction center is composed of one copy each of PsaA,B,C,D,E,F,I,J,K,L,M and X, and forms trimeric complexes. The cofactor is PSI electron transfer chain: 5 chlorophyll a, 1 chlorophyll a', 2 phylloquinones and 3 4Fe-4S clusters. PSI core antenna: 90 chlorophyll a, 22 carotenoids, 3 phospholipids and 1 galactolipid. P700 is a chlorophyll a/chlorophyll a' dimer, A0 is one or more chlorophyll a, A1 is one or both phylloquinones and FX is a shared 4Fe-4S iron-sulfur center..

It is found in the cellular thylakoid membrane. It catalyses the reaction reduced [plastocyanin] + hnu + oxidized [2Fe-2S]-[ferredoxin] = oxidized [plastocyanin] + reduced [2Fe-2S]-[ferredoxin]. Functionally, psaA and PsaB bind P700, the primary electron donor of photosystem I (PSI), as well as the electron acceptors A0, A1 and FX. PSI is a plastocyanin/cytochrome c6-ferredoxin oxidoreductase, converting photonic excitation into a charge separation, which transfers an electron from the donor P700 chlorophyll pair to the spectroscopically characterized acceptors A0, A1, FX, FA and FB in turn. Oxidized P700 is reduced on the lumenal side of the thylakoid membrane by plastocyanin or cytochrome c6. The polypeptide is Photosystem I P700 chlorophyll a apoprotein A2 (Synechococcus sp. (strain CC9311)).